We begin with the raw amino-acid sequence, 137 residues long: Small ribosomal subunit protein uS11 (137 aa).

Residues M1–K11 are compositionally biased toward polar residues. Disordered stretches follow at residues M1 to A28 and T117 to V137. A compositionally biased stretch (basic residues) spans K12–K21.

This sequence belongs to the universal ribosomal protein uS11 family. Part of the 30S ribosomal subunit. Interacts with proteins S7 and S18. Binds to IF-3.

Functionally, located on the platform of the 30S subunit, it bridges several disparate RNA helices of the 16S rRNA. Forms part of the Shine-Dalgarno cleft in the 70S ribosome. This is Small ribosomal subunit protein uS11 from Rhodococcus opacus (strain B4).